The primary structure comprises 343 residues: NAC domain-containing protein 4 (343 aa).

The 157-residue stretch at 12–168 folds into the NAC domain; that stretch reads LPPGFRFHPT…EWVLCRVFKK (157 aa). A DNA-binding region spans residues 109-174; it reads VGMKKTLVFY…VFKKSLVEVG (66 aa). Residues 304 to 333 are disordered; sequence GGERERLSASQDTGLTSDVNPEISSSSGQK. Positions 311–332 are enriched in polar residues; the sequence is SASQDTGLTSDVNPEISSSSGQ.

As to expression, expressed in roots, tiller buds, stems, leaves, lamina joints and the young husks. Expressed in embryos, coleoptiles, radicles, leaf pulvinus, ligules, panicles, palea and lemma, anthers, and the internode of the peduncles. Expressed in young leaves, root meristems, florescence meristems and young spikelets.

It is found in the nucleus. Functionally, transcription factor involved in the regulation of tiller bud outgrowth, but does not seem to regulate tiller bud initiation. Possesses transactivation activity in yeast. Involved in the regulation of plant architecture and grain yield. Acts as a negative regulator of plant height and flowering time. Regulates directly key genes of the gibberellin (GA) pathway by binding to their promoters. Positively regulates leaf senescence in an age-dependent manner. Activates directly the expression of the chlorophyll degradation genes SGR and NYC3. Positively regulates the level of abscisic acid (ABA) by directly up-regulating the expression of the ABA biosynthetic genes NCED3 and ZEP, and down-regulating the ABA catabolic gene CYP707A5/ABA8OX1. Promotes salt-induced cell death accompanied by the loss of plasma membrane integrity, nuclear DNA fragmentation, and changes of caspase-like activity. Targets genes that encoded a reactive oxygen species (ROS) scavenger COX11 and a caspase-like protease AP37. Activates the potassium efflux channels GORK and SKOR. Acts as a positive regulator of drought and salt tolerance through ABA-mediated pathways. Acts as a negative regulator of root growth. Functions as an upstream integrator of auxin and cytokinin signals that affect CROWN ROOTLESS (CRL) and cyclin-dependent protein kinase (CDK) genes to regulate cell division during root development. Binds directly to the promoters of the auxin inactivation-related genes GH3.6 and GH3.8, the auxin signaling-related gene ARF25, and the cytokinin oxidase gene CKX4. Activates directly the expressions of the 1-aminocyclopropane-1-carboxylate oxidase genes ACO1 and ACO3, enhancing ethylene synthesis, and then retarding seedling establishment. In Oryza sativa subsp. japonica (Rice), this protein is NAC domain-containing protein 4.